Reading from the N-terminus, the 253-residue chain is Blue-light photoreceptor (253 aa).

Positions Lys-6–Lys-79 constitute a PAS domain. Residue Cys-56 is modified to S-4a-FMN cysteine. The 54-residue stretch at Ser-80–Lys-133 folds into the PAC domain. In terms of domain architecture, STAS spans Ser-142–Tyr-253.

Post-translationally, FMN binds covalently to cysteine after exposure to blue light and this bond is spontaneously broken in the dark.

In terms of biological role, exhibits the same spectroscopical features and blue-light induced photochemistry as plants phototropins, with the reversible formation of a blue-shifted photoproduct, assigned to an FMN-cysteine thiol adduct. Positive regulator in the activation of the general stress transcription factor sigma-B. This chain is Blue-light photoreceptor, found in Listeria innocua serovar 6a (strain ATCC BAA-680 / CLIP 11262).